A 506-amino-acid polypeptide reads, in one-letter code: Cysteine--tRNA ligase (506 aa).

Zn(2+) is bound at residue Cys34. The 'HIGH' region signature appears at 36–46; that stretch reads PTVYDFAHIGN. Zn(2+) is bound by residues Cys230, His269, and Glu273. The 'KMSKS' region motif lies at 302 to 306; the sequence is KMSKS. Lys305 serves as a coordination point for ATP.

Belongs to the class-I aminoacyl-tRNA synthetase family. Monomer. It depends on Zn(2+) as a cofactor.

The protein resides in the cytoplasm. The catalysed reaction is tRNA(Cys) + L-cysteine + ATP = L-cysteinyl-tRNA(Cys) + AMP + diphosphate. This is Cysteine--tRNA ligase from Brucella suis (strain ATCC 23445 / NCTC 10510).